We begin with the raw amino-acid sequence, 105 residues long: Large ribosomal subunit protein P1 (105 aa).

Position 1 is a blocked amino end (Met) (Met-1). The segment covering 65 to 76 (VAAPAGQQTQQA) has biased composition (low complexity). Residues 65-105 (VAAPAGQQTQQAAEKKEEKKEEEKKGPSEEEIGGGLSSLFG) form a disordered region. The segment covering 77-92 (AEKKEEKKEEEKKGPS) has biased composition (basic and acidic residues).

The protein belongs to the eukaryotic ribosomal protein P1/P2 family. As to quaternary structure, part of the 50S ribosomal subunit. Homodimer, it forms part of the ribosomal stalk which helps the ribosome interact with GTP-bound translation factors. Forms a heptameric uL10/P0(P1)2(P1)2(P1)2 complex, where uL10/P0 forms an elongated spine to which the P1 dimers bind in a sequential fashion.

Forms part of the ribosomal stalk, playing a central role in the interaction of the ribosome with GTP-bound translation factors. The chain is Large ribosomal subunit protein P1 from Sulfolobus acidocaldarius (strain ATCC 33909 / DSM 639 / JCM 8929 / NBRC 15157 / NCIMB 11770).